Reading from the N-terminus, the 139-residue chain is Large ribosomal subunit protein uL16 (139 aa).

The protein belongs to the universal ribosomal protein uL16 family. In terms of assembly, part of the 50S ribosomal subunit.

Binds 23S rRNA and is also seen to make contacts with the A and possibly P site tRNAs. The chain is Large ribosomal subunit protein uL16 from Picosynechococcus sp. (strain ATCC 27264 / PCC 7002 / PR-6) (Agmenellum quadruplicatum).